We begin with the raw amino-acid sequence, 327 residues long: Pantothenate kinase (327 aa).

105–112 (GSVAVGKS) lines the ATP pocket.

Belongs to the prokaryotic pantothenate kinase family.

It localises to the cytoplasm. It carries out the reaction (R)-pantothenate + ATP = (R)-4'-phosphopantothenate + ADP + H(+). It functions in the pathway cofactor biosynthesis; coenzyme A biosynthesis; CoA from (R)-pantothenate: step 1/5. In Cutibacterium acnes (strain DSM 16379 / KPA171202) (Propionibacterium acnes), this protein is Pantothenate kinase.